Reading from the N-terminus, the 514-residue chain is Na(+)/H(+) antiporter NhaB (514 aa).

12 helical membrane-spanning segments follow: residues 23–43, 63–83, 97–117, 120–140, 144–164, 202–222, 238–258, 303–323, 357–377, 391–411, 447–467, and 475–495; these read LALL…PFIA, PLLP…TSAA, LLLM…LFIF, LLLS…AAAF, FLDA…FYGI, LMMH…VGEP, FFLR…LTCM, AVIG…VGLI, LTVF…APII, LFYL…VGTI, ATPN…APLI, and VWMA…CVEF.

It belongs to the NhaB Na(+)/H(+) (TC 2.A.34) antiporter family.

The protein resides in the cell inner membrane. The catalysed reaction is 2 Na(+)(in) + 3 H(+)(out) = 2 Na(+)(out) + 3 H(+)(in). Na(+)/H(+) antiporter that extrudes sodium in exchange for external protons. The chain is Na(+)/H(+) antiporter NhaB from Salmonella choleraesuis (strain SC-B67).